The chain runs to 387 residues: Phosphoglycerate kinase (387 aa).

Substrate contacts are provided by residues 21–23 (DLN), Arg-36, 59–62 (HLGR), Arg-113, and Arg-146. Residues Lys-197, Glu-314, and 340–343 (GGDT) each bind ATP.

The protein belongs to the phosphoglycerate kinase family. As to quaternary structure, monomer.

Its subcellular location is the cytoplasm. It catalyses the reaction (2R)-3-phosphoglycerate + ATP = (2R)-3-phospho-glyceroyl phosphate + ADP. Its pathway is carbohydrate degradation; glycolysis; pyruvate from D-glyceraldehyde 3-phosphate: step 2/5. This chain is Phosphoglycerate kinase, found in Yersinia enterocolitica serotype O:8 / biotype 1B (strain NCTC 13174 / 8081).